We begin with the raw amino-acid sequence, 70 residues long: Guanine nucleotide-binding protein G(I)/G(S)/G(O) subunit gamma-8 (70 aa).

Cys-67 is subject to Cysteine methyl ester. Cys-67 is lipidated: S-geranylgeranyl cysteine. Residues 68–70 (TLL) constitute a propeptide, removed in mature form.

This sequence belongs to the G protein gamma family. In terms of assembly, g proteins are composed of 3 units, alpha, beta and gamma. In terms of tissue distribution, detected in the olfactory epithelium, the vomeronasal epithelium and, to a lesser extent, the olfactory bulb.

Its subcellular location is the cell membrane. Functionally, guanine nucleotide-binding proteins (G proteins) are involved as a modulator or transducer in various transmembrane signaling systems. The beta and gamma chains are required for the GTPase activity, for replacement of GDP by GTP, and for G protein-effector interaction. This subunit may have a very specific role in the development and turnover of olfactory and vomeronasal neurons. This chain is Guanine nucleotide-binding protein G(I)/G(S)/G(O) subunit gamma-8 (Gng8), found in Rattus norvegicus (Rat).